Reading from the N-terminus, the 561-residue chain is Glucose-6-phosphate isomerase (561 aa).

Glu-366 serves as the catalytic Proton donor. Catalysis depends on residues His-397 and Lys-525.

Belongs to the GPI family.

The protein resides in the cytoplasm. The catalysed reaction is alpha-D-glucose 6-phosphate = beta-D-fructose 6-phosphate. It participates in carbohydrate degradation; glycolysis; D-glyceraldehyde 3-phosphate and glycerone phosphate from D-glucose: step 2/4. The sequence is that of Glucose-6-phosphate isomerase (gpi) from Dictyostelium discoideum (Social amoeba).